Consider the following 150-residue polypeptide: Small ribosomal subunit protein uS15 (150 aa).

Positions Met-1 to Gln-22 are disordered.

The protein belongs to the universal ribosomal protein uS15 family. As to quaternary structure, part of the 30S ribosomal subunit.

This chain is Small ribosomal subunit protein uS15, found in Aeropyrum pernix (strain ATCC 700893 / DSM 11879 / JCM 9820 / NBRC 100138 / K1).